The following is a 749-amino-acid chain: Replication restart protein PriA (749 aa).

In terms of domain architecture, Helicase ATP-binding spans S224–L391. Residue G237 to T244 coordinates ATP. The short motif at D333–H336 is the DEAH box element. Residues C454, C457, C463, C466, C481, C484, C495, and C498 each coordinate Zn(2+). One can recognise a Helicase C-terminal domain in the interval D490 to R658.

Belongs to the helicase family. PriA subfamily. As to quaternary structure, component of the replication restart primosome. Zn(2+) is required as a cofactor.

It catalyses the reaction Couples ATP hydrolysis with the unwinding of duplex DNA by translocating in the 3'-5' direction.. The enzyme catalyses ATP + H2O = ADP + phosphate + H(+). Its function is as follows. Initiates the restart of stalled replication forks, which reloads the replicative helicase on sites other than the origin of replication. Recognizes and binds to abandoned replication forks and remodels them to uncover a helicase loading site. Promotes assembly of the primosome at these replication forks. In Chlamydia pneumoniae (Chlamydophila pneumoniae), this protein is Replication restart protein PriA.